Here is a 219-residue protein sequence, read N- to C-terminus: RNA-free ribonuclease P (219 aa).

This sequence belongs to the HARP family.

The enzyme catalyses Endonucleolytic cleavage of RNA, removing 5'-extranucleotides from tRNA precursor.. RNA-free RNase P that catalyzes the removal of the 5'-leader sequence from pre-tRNA to produce the mature 5'-terminus. This is RNA-free ribonuclease P from Staphylothermus marinus (strain ATCC 43588 / DSM 3639 / JCM 9404 / F1).